A 300-amino-acid chain; its full sequence is Probable lipid kinase YegS-like (300 aa).

One can recognise a DAGKc domain in the interval 1 to 129; that stretch reads MSKKALLILH…CDVIRVNNHY (129 aa). ATP is bound by residues T38, 64 to 70, and T92; that span reads GDGSVRD. Residues L210, D213, and L215 each coordinate Mg(2+). Catalysis depends on E272, which acts as the Proton acceptor.

This sequence belongs to the diacylglycerol/lipid kinase family. YegS lipid kinase subfamily. Mg(2+) is required as a cofactor. It depends on Ca(2+) as a cofactor.

The protein resides in the cytoplasm. In terms of biological role, probably phosphorylates lipids; the in vivo substrate is unknown. The protein is Probable lipid kinase YegS-like of Alcanivorax borkumensis (strain ATCC 700651 / DSM 11573 / NCIMB 13689 / SK2).